The chain runs to 203 residues: MECPKEIVLLMHSYFDGDLQPEGEQQLKEHLRSCAACAAHFHELKKTVAFLQYAAHVAAPPSFAAKVMEAMPKERKTARLRRFLHRHPLLTAASLFLALTLGSLASSWGERGAFSVSADEHVIIRDHTVIVPKGETVKGDIVVRNGSIRIEGTVDGDVTVIHGKKYMASAGQVTGEVEEINQVFEWIWYNIKERFNRALQSIE.

Residues M1 to R86 lie on the Cytoplasmic side of the membrane. Residues H30, C34, and C37 each coordinate Zn(2+). A helical membrane pass occupies residues H87 to S103. Over L104–E203 the chain is Extracellular.

This sequence belongs to the zinc-associated anti-sigma factor (ZAS) superfamily. Anti-sigma-W factor family. The cofactor is Zn(2+). Is processed by three successive proteolytic events. First, the extracellular region of RsiW is cleaved by PrsW (Site-1 cleavage) in response to cell envelope stresses. Next, it undergoes cleavage at an intramembrane site (Site-2 cleavage) mediated by RasP. This cleavage uncovers a cryptic proteolytic tag with conserved alanine residues in the transmembrane segment, that is recognized mainly by the ClpXP protease, which completely degrades the protein in the cytoplasm and leads to the induction of the sigma-W-controlled genes.

Its subcellular location is the membrane. Is the anti-sigma factor for SigW. The presence of RsiW leads to the inactivation of SigW, and its proteolytic destruction to sigma-W activation. The sequence is that of Anti-sigma-W factor RsiW (rsiW) from Geobacillus kaustophilus (strain HTA426).